Here is a 1057-residue protein sequence, read N- to C-terminus: Carbamoyl phosphate synthase large chain (1057 aa).

Positions 1-401 (MPKRNDIKTI…SLLKAIRSLE (401 aa)) are carboxyphosphate synthetic domain. ATP-binding residues include R129, R169, G175, G176, K208, I210, E215, G241, I242, H243, Q284, and E298. One can recognise an ATP-grasp 1 domain in the interval 133–327 (RTLMNDLNVP…IAKLAAKIAV (195 aa)). 3 residues coordinate Mg(2+): Q284, E298, and N300. Mn(2+) is bound by residues Q284, E298, and N300. Residues 402-546 (YGVHHLGLPN…YGTYETENES (145 aa)) are oligomerization domain. The carbamoyl phosphate synthetic domain stretch occupies residues 547–929 (IVTDKEKILV…ALFKGLTGSG (383 aa)). One can recognise an ATP-grasp 2 domain in the interval 671-861 (EALLRKINVP…MAQLAMRAII (191 aa)). R707, R746, L748, E752, G777, V778, H779, S780, Q820, and E832 together coordinate ATP. Mg(2+) contacts are provided by Q820, E832, and N834. Positions 820, 832, and 834 each coordinate Mn(2+). Residues 930 to 1057 (VEVKDHGTVL…ESMTFTMRQM (128 aa)) enclose the MGS-like domain. Positions 930 to 1057 (VEVKDHGTVL…ESMTFTMRQM (128 aa)) are allosteric domain.

Belongs to the CarB family. As to quaternary structure, composed of two chains; the small (or glutamine) chain promotes the hydrolysis of glutamine to ammonia, which is used by the large (or ammonia) chain to synthesize carbamoyl phosphate. Tetramer of heterodimers (alpha,beta)4. Requires Mg(2+) as cofactor. It depends on Mn(2+) as a cofactor.

The enzyme catalyses hydrogencarbonate + L-glutamine + 2 ATP + H2O = carbamoyl phosphate + L-glutamate + 2 ADP + phosphate + 2 H(+). The catalysed reaction is hydrogencarbonate + NH4(+) + 2 ATP = carbamoyl phosphate + 2 ADP + phosphate + 2 H(+). It functions in the pathway amino-acid biosynthesis; L-arginine biosynthesis; carbamoyl phosphate from bicarbonate: step 1/1. Its pathway is pyrimidine metabolism; UMP biosynthesis via de novo pathway; (S)-dihydroorotate from bicarbonate: step 1/3. Its function is as follows. Large subunit of the glutamine-dependent carbamoyl phosphate synthetase (CPSase). CPSase catalyzes the formation of carbamoyl phosphate from the ammonia moiety of glutamine, carbonate, and phosphate donated by ATP, constituting the first step of 2 biosynthetic pathways, one leading to arginine and/or urea and the other to pyrimidine nucleotides. The large subunit (synthetase) binds the substrates ammonia (free or transferred from glutamine from the small subunit), hydrogencarbonate and ATP and carries out an ATP-coupled ligase reaction, activating hydrogencarbonate by forming carboxy phosphate which reacts with ammonia to form carbamoyl phosphate. The chain is Carbamoyl phosphate synthase large chain from Staphylococcus aureus (strain MRSA252).